Here is a 395-residue protein sequence, read N- to C-terminus: Acetylornithine aminotransferase (395 aa).

Pyridoxal 5'-phosphate-binding positions include 117–118 (GA) and phenylalanine 144. Arginine 147 provides a ligand contact to N(2)-acetyl-L-ornithine. 230–233 (DEVQ) is a binding site for pyridoxal 5'-phosphate. At lysine 259 the chain carries N6-(pyridoxal phosphate)lysine. Serine 285 contributes to the N(2)-acetyl-L-ornithine binding site. Pyridoxal 5'-phosphate is bound at residue threonine 286.

The protein belongs to the class-III pyridoxal-phosphate-dependent aminotransferase family. ArgD subfamily. In terms of assembly, homodimer. Requires pyridoxal 5'-phosphate as cofactor.

It is found in the cytoplasm. It catalyses the reaction N(2)-acetyl-L-ornithine + 2-oxoglutarate = N-acetyl-L-glutamate 5-semialdehyde + L-glutamate. Its pathway is amino-acid biosynthesis; L-arginine biosynthesis; N(2)-acetyl-L-ornithine from L-glutamate: step 4/4. The protein is Acetylornithine aminotransferase of Methanosarcina acetivorans (strain ATCC 35395 / DSM 2834 / JCM 12185 / C2A).